Consider the following 615-residue polypeptide: DNA mismatch repair protein MutL (615 aa).

A disordered region spans residues 362–397; the sequence is HFAEPAVREPVAPRYSPAPASGSRPAASWPNAQPGY. A compositionally biased stretch (low complexity) spans 373 to 391; sequence APRYSPAPASGSRPAASWP.

This sequence belongs to the DNA mismatch repair MutL/HexB family.

Its function is as follows. This protein is involved in the repair of mismatches in DNA. It is required for dam-dependent methyl-directed DNA mismatch repair. May act as a 'molecular matchmaker', a protein that promotes the formation of a stable complex between two or more DNA-binding proteins in an ATP-dependent manner without itself being part of a final effector complex. In Escherichia coli O45:K1 (strain S88 / ExPEC), this protein is DNA mismatch repair protein MutL.